Consider the following 122-residue polypeptide: Large ribosomal subunit protein uL14 (122 aa).

This sequence belongs to the universal ribosomal protein uL14 family. Part of the 50S ribosomal subunit. Forms a cluster with proteins L3 and L19. In the 70S ribosome, L14 and L19 interact and together make contacts with the 16S rRNA in bridges B5 and B8.

Its function is as follows. Binds to 23S rRNA. Forms part of two intersubunit bridges in the 70S ribosome. This is Large ribosomal subunit protein uL14 from Limosilactobacillus reuteri (strain DSM 20016) (Lactobacillus reuteri).